Here is a 95-residue protein sequence, read N- to C-terminus: Opiscorpine-4 (95 aa).

The first 19 residues, 1–19 (MNNKLTALIFLGLLAIASC), serve as a signal peptide directing secretion. In terms of domain architecture, BetaSPN-type CS-alpha/beta spans 55–95 (EFMCVANIDMTKSCDTHCQKASGEKGYCHGTKCKCGVPLSY). 3 disulfide bridges follow: Cys58/Cys82, Cys68/Cys87, and Cys72/Cys89.

This sequence belongs to the long chain scorpion toxin family. Class 3 subfamily. As to expression, expressed by the venom gland.

The protein resides in the secreted. Its function is as follows. Has antimicrobial activity against yeasts and bacteria. The polypeptide is Opiscorpine-4 (Opistophthalmus carinatus (African yellow leg scorpion)).